The following is a 692-amino-acid chain: Serine/threonine-protein phosphatase PP-Z1 (692 aa).

Disordered stretches follow at residues 1 to 309 (MGNS…DIEN) and 321 to 357 (ENVN…PKKF). The N-myristoyl glycine moiety is linked to residue G2. Low complexity-rich tracts occupy residues 32-41 (SHSVKSAKSN), 49-69 (SLPS…STPS), and 91-122 (SSSH…RRSS). S49 is modified (phosphoserine). Residues 170 to 179 (LTDDDNDDKD) are compositionally biased toward acidic residues. T171 carries the post-translational modification Phosphothreonine. Residues 190-204 (RSSNSRPSSIRSGSV) show a composition bias toward low complexity. The span at 207–216 (RKSDVTHEEP) shows a compositional bias: basic and acidic residues. A phosphoserine mark is found at S209 and S222. 2 stretches are compositionally biased toward polar residues: residues 217–229 (NNGS…QENY) and 251–267 (FGSD…NSPG). T261 carries the phosphothreonine modification. A Phosphoserine modification is found at S265. Residues 280–289 (TSNSTSSLNH) show a composition bias toward low complexity. A compositionally biased stretch (basic and acidic residues) spans 291-303 (SSRDIYPSKHISN). A compositionally biased stretch (polar residues) spans 321-331 (ENVNDKNNNIT). Residues D419, H421, D447, and N479 each coordinate Mn(2+). The active-site Proton donor is H480. Mn(2+) is bound by residues H528 and H603. Residues 672–692 (LANQQQQMMETSITNDNESQQ) form a disordered region. The segment covering 673 to 692 (ANQQQQMMETSITNDNESQQ) has biased composition (polar residues). S690 is subject to Phosphoserine.

It belongs to the PPP phosphatase family. PP-Z subfamily. As to quaternary structure, interacts with SIS2 and VHS3, which regulate its activity. The cofactor is Mn(2+).

The catalysed reaction is O-phospho-L-seryl-[protein] + H2O = L-seryl-[protein] + phosphate. It catalyses the reaction O-phospho-L-threonyl-[protein] + H2O = L-threonyl-[protein] + phosphate. Its activity is regulated as follows. Inhibited by the regulatory subunits VHS3 and SIS2. Essential for the maintenance of cell size and integrity in response to osmotic stress. This Saccharomyces cerevisiae (strain ATCC 204508 / S288c) (Baker's yeast) protein is Serine/threonine-protein phosphatase PP-Z1 (PPZ1).